We begin with the raw amino-acid sequence, 200 residues long: Holliday junction branch migration complex subunit RuvA (200 aa).

The domain I stretch occupies residues 1–64; it reads MIGHLRGIIV…EDAHTLYGFH (64 aa). The domain II stretch occupies residues 65-143; the sequence is NDHERRLFRA…RWHTNDTPSP (79 aa). The tract at residues 133–152 is disordered; sequence SRWHTNDTPSPEGLRSSNTQ. The segment at 144–148 is flexible linker; that stretch reads EGLRS. A domain III region spans residues 149–200; sequence SNTQPTQDAISALMALGYKPQEAKRAIDAIQKPDLSAETLIRLALKQMVLGT.

Belongs to the RuvA family. Homotetramer. Forms an RuvA(8)-RuvB(12)-Holliday junction (HJ) complex. HJ DNA is sandwiched between 2 RuvA tetramers; dsDNA enters through RuvA and exits via RuvB. An RuvB hexamer assembles on each DNA strand where it exits the tetramer. Each RuvB hexamer is contacted by two RuvA subunits (via domain III) on 2 adjacent RuvB subunits; this complex drives branch migration. In the full resolvosome a probable DNA-RuvA(4)-RuvB(12)-RuvC(2) complex forms which resolves the HJ.

The protein resides in the cytoplasm. In terms of biological role, the RuvA-RuvB-RuvC complex processes Holliday junction (HJ) DNA during genetic recombination and DNA repair, while the RuvA-RuvB complex plays an important role in the rescue of blocked DNA replication forks via replication fork reversal (RFR). RuvA specifically binds to HJ cruciform DNA, conferring on it an open structure. The RuvB hexamer acts as an ATP-dependent pump, pulling dsDNA into and through the RuvAB complex. HJ branch migration allows RuvC to scan DNA until it finds its consensus sequence, where it cleaves and resolves the cruciform DNA. The chain is Holliday junction branch migration complex subunit RuvA from Coxiella burnetii (strain CbuK_Q154) (Coxiella burnetii (strain Q154)).